The sequence spans 1534 residues: Dicer-like protein 2 (1534 aa).

A compositionally biased stretch (basic and acidic residues) spans 1–10 (MDQDPRKDNP). Positions 1 to 36 (MDQDPRKDNPVEMDVDRDDSSQDPDDNESFKSALDE) are disordered. The span at 11–27 (VEMDVDRDDSSQDPDDN) shows a compositional bias: acidic residues. A Helicase ATP-binding domain is found at 65–249 (TPAALTARAY…IEKLEQVLDA (185 aa)). 78–85 (MFEASLKQ) is a binding site for ATP. Positions 192 to 195 (DEAH) match the DEAH box motif. A Helicase C-terminal domain is found at 404–575 (KVQTLLKVLA…NAELELLDDP (172 aa)). Residues 597 to 700 (ARSHLNHFCA…LPTKVSDFLA (104 aa)) enclose the Dicer dsRNA-binding fold domain. 2 consecutive RNase III domains span residues 959–1107 (MSLV…MCGG) and 1153–1353 (LEPL…VDSG). The Mg(2+) site is built by glutamate 1193, aspartate 1339, and glutamate 1342. The DRBM domain maps to 1383 to 1483 (HPNVELQILA…AEKGCLVIKA (101 aa)). Positions 1492–1504 (KAAAKEDKGHNTE) are enriched in basic and acidic residues. The tract at residues 1492-1534 (KAAAKEDKGHNTENGDANADNGQSGEKEEVPDCRDADGDTVMN) is disordered. Residues 1505–1515 (NGDANADNGQS) show a composition bias toward polar residues. Basic and acidic residues predominate over residues 1516-1528 (GEKEEVPDCRDAD).

The protein belongs to the helicase family. Dicer subfamily. It depends on Mg(2+) as a cofactor. The cofactor is Mn(2+).

Functionally, dicer-like endonuclease involved in cleaving double-stranded RNA in the RNA interference (RNAi) pathway. Produces 21 to 25 bp dsRNAs (siRNAs) which target the selective destruction of homologous RNAs leading to sequence-specific suppression of gene expression, called post-transcriptional gene silencing (PTGS). Part of a broad host defense response against viral infection and transposons. Controls the expression of the non-LTR retrotransposon Tad in the African strain, Adiomopoume. The polypeptide is Dicer-like protein 2 (dcl-2) (Neurospora crassa (strain ATCC 24698 / 74-OR23-1A / CBS 708.71 / DSM 1257 / FGSC 987)).